The sequence spans 441 residues: Carbohydrate sulfotransferase 3 (441 aa).

Topologically, residues 1–4 are cytoplasmic; the sequence is MKMR. A helical; Signal-anchor for type II membrane protein transmembrane segment spans residues 5–21; that stretch reads SKYAIILFFVVALVIIE. The Lumenal segment spans residues 22–441; the sequence is KERNIISRVS…LLENRNFWIT (420 aa). Residues N47 and N58 are each glycosylated (N-linked (GlcNAc...) asparagine). 106–112 contributes to the 3'-phosphoadenylyl sulfate binding site; that stretch reads TRTGSSF. An N-linked (GlcNAc...) asparagine glycan is attached at N221. 266–274 is a 3'-phosphoadenylyl sulfate binding site; the sequence is RDPRAVLAS. An N-linked (GlcNAc...) asparagine glycan is attached at N427.

It belongs to the sulfotransferase 1 family. Gal/GlcNAc/GalNAc subfamily. N-glycosylated. In terms of tissue distribution, in electric organ, it is moderately expressed in spinal cord and electric lobe and undetectable in non-neural tissues. Expressed in a punctate distribution in the innervated portion of electrocytes. In the CNS, it is localized within the somas of motor neurons and neurons of the electromotor nucleus.

It is found in the golgi apparatus membrane. It carries out the reaction chondroitin beta-D-glucuronate + n 3'-phosphoadenylyl sulfate = chondroitin 6'-sulfate + n adenosine 3',5'-bisphosphate + n H(+). The catalysed reaction is 3'-phosphoadenylyl sulfate + keratan = adenosine 3',5'-bisphosphate + keratan 6'-sulfate.. Sulfotransferase that utilizes 3'-phospho-5'-adenylyl sulfate (PAPS) as sulfonate donor to catalyze the transfer of sulfate to position 6 of the N-acetylgalactosamine (GalNAc) residue of chondroitin. Chondroitin sulfate constitutes the predominant proteoglycan present in cartilage and is distributed on the surfaces of many cells and extracellular matrices. Catalyzes with a lower efficiency the sulfation of Gal residues of keratan sulfate, another glycosaminoglycan. Can also catalyze the sulfation of the Gal residues in sialyl N-acetyllactosamine (sialyl LacNAc) oligosaccharides. The sequence is that of Carbohydrate sulfotransferase 3 (CHST3) from Tetronarce californica (Pacific electric ray).